Consider the following 389-residue polypeptide: Phosphoribosylformylglycinamidine cyclo-ligase, chloroplastic (389 aa).

Residues 1–58 (MEARILQSSSSCYSSLYAVNRSRFSSVSSPKPFSVSFAQTTRTRTRVLSMSKKDGRTD) constitute a chloroplast transit peptide. Residues 46–65 (RVLSMSKKDGRTDKDDDTDS) are disordered.

Belongs to the AIR synthase family.

It localises to the plastid. Its subcellular location is the chloroplast. It carries out the reaction 2-formamido-N(1)-(5-O-phospho-beta-D-ribosyl)acetamidine + ATP = 5-amino-1-(5-phospho-beta-D-ribosyl)imidazole + ADP + phosphate + H(+). It functions in the pathway purine metabolism; IMP biosynthesis via de novo pathway; 5-amino-1-(5-phospho-D-ribosyl)imidazole from N(2)-formyl-N(1)-(5-phospho-D-ribosyl)glycinamide: step 2/2. The polypeptide is Phosphoribosylformylglycinamidine cyclo-ligase, chloroplastic (PUR5) (Arabidopsis thaliana (Mouse-ear cress)).